We begin with the raw amino-acid sequence, 430 residues long: Serine--tRNA ligase (430 aa).

237–239 (TAE) lines the L-serine pocket. 268 to 270 (RSE) provides a ligand contact to ATP. Glu-291 lines the L-serine pocket. 355 to 358 (EISS) contributes to the ATP binding site. Residue Ser-391 coordinates L-serine.

Belongs to the class-II aminoacyl-tRNA synthetase family. Type-1 seryl-tRNA synthetase subfamily. As to quaternary structure, homodimer. The tRNA molecule binds across the dimer.

It is found in the cytoplasm. It carries out the reaction tRNA(Ser) + L-serine + ATP = L-seryl-tRNA(Ser) + AMP + diphosphate + H(+). It catalyses the reaction tRNA(Sec) + L-serine + ATP = L-seryl-tRNA(Sec) + AMP + diphosphate + H(+). It functions in the pathway aminoacyl-tRNA biosynthesis; selenocysteinyl-tRNA(Sec) biosynthesis; L-seryl-tRNA(Sec) from L-serine and tRNA(Sec): step 1/1. Its function is as follows. Catalyzes the attachment of serine to tRNA(Ser). Is also able to aminoacylate tRNA(Sec) with serine, to form the misacylated tRNA L-seryl-tRNA(Sec), which will be further converted into selenocysteinyl-tRNA(Sec). This chain is Serine--tRNA ligase, found in Citrobacter koseri (strain ATCC BAA-895 / CDC 4225-83 / SGSC4696).